The chain runs to 92 residues: Turripeptide UID-02 (92 aa).

An N-terminal signal peptide occupies residues M1–A21. A propeptide spanning residues T22–N39 is cleaved from the precursor.

Expressed by the venom duct.

Its subcellular location is the secreted. The sequence is that of Turripeptide UID-02 from Gemmula speciosa (Splendid gem-turris).